A 320-amino-acid polypeptide reads, in one-letter code: Pyrroline-5-carboxylate reductase 2 (320 aa).

Serine 2 carries the N-acetylserine modification. NADP(+)-binding positions include isoleucine 6–leucine 11 and serine 34. NADPH is bound by residues alanine 8, glutamine 10, leucine 11, serine 34, glutamate 36, asparagine 56, valine 70, lysine 71, and alanine 97. Residues asparagine 56, alanine 69 to proline 72, and cysteine 95 to alanine 97 contribute to the NADP(+) site. Glutamate 164 is a binding site for L-proline. Asparagine 230 is an NADPH binding site. L-proline contacts are provided by alanine 237 and threonine 238. Positions glutamate 293–glutamate 320 are disordered. Phosphoserine is present on serine 304.

Belongs to the pyrroline-5-carboxylate reductase family. Homodecamer; composed of 5 homodimers. Interacts with LTO1.

Its subcellular location is the cytoplasm. The protein localises to the mitochondrion. The catalysed reaction is L-proline + NADP(+) = (S)-1-pyrroline-5-carboxylate + NADPH + 2 H(+). It carries out the reaction L-proline + NAD(+) = (S)-1-pyrroline-5-carboxylate + NADH + 2 H(+). The protein operates within amino-acid biosynthesis; L-proline biosynthesis; L-proline from L-glutamate 5-semialdehyde: step 1/1. In terms of biological role, oxidoreductase that catalyzes the last step in proline biosynthesis, which corresponds to the reduction of pyrroline-5-carboxylate to L-proline using NAD(P)H. At physiologic concentrations, has higher specific activity in the presence of NADH. Involved in cellular response to oxidative stress. In some cell types, such as erythrocytes, its primary function may be the generation of NADP(+). The chain is Pyrroline-5-carboxylate reductase 2 from Rattus norvegicus (Rat).